The chain runs to 752 residues: MEGPEIQFSEAVIDNGRFGKRVIRFETGRLAKQAAGAAMVYIDEDTALLSATTAGKHPREGFDFFPLTVDVEERMYAAGRIPGSFFRREGRPSTEAILACRLMDRPLRPAFVKGLRNEVQIVVTVLAINPDELYDVVAINASSMSTQLSGLPFSGPIGGVRVALVADENGSQWVAFPKHSQLENSVFNMVVAGRVAGDDVAIMMVEAEATDNSWNLIKEQGATAPTEEVVSEGLEAAKPFIKALCDAQADLAARAAKPTVEFPVFLDYQDDVYAAVEAAAADKLAAVFQIADKQERDTASDALKDEVTSSLAGQFEGREKELSAAFRSVTKHVVRQRILKDQIRIDGRGLTDIRQLTAEVEVLPRVHGSAIFERGETQIMGVTTLNMLKMEQQIDSLSPVTRKRYMHNYNFPPYSTGETGRVGSPKRREIGHGALAERALVPVLPSREEFPYAIRQVSEALGSNGSTSMGSVCASTLSMLNAGVPLKAAVAGIAMGLVSDQVDGQTRYAALTDILGAEDAFGDMDFKVAGTSEFVTAIQLDTKLDGIPASVLAAALKQAREARLHILEVINSAIDTPDELSEFAPRVIAVKIPVDKIGEVIGPKGKMINQIQEDTGADISIEDDGTVYIGATNGPSADAARSAINAIANPQVPEIGERYLGTVVKTTTFGAFVSLTPGKDGLLHISELRKLANGKRVDNVDDVVSVGQKVQVEITKIDDRGKLSLSPVVAEEEGAEGAERAHATEPAEGAEI.

Residues aspartate 519 and aspartate 525 each contribute to the Mg(2+) site. Positions 585 to 644 constitute a KH domain; the sequence is PRVIAVKIPVDKIGEVIGPKGKMINQIQEDTGADISIEDDGTVYIGATNGPSADAARSAI. The S1 motif domain maps to 656–728; the sequence is GERYLGTVVK…DRGKLSLSPV (73 aa). A disordered region spans residues 727 to 752; the sequence is PVVAEEEGAEGAERAHATEPAEGAEI.

It belongs to the polyribonucleotide nucleotidyltransferase family. Mg(2+) is required as a cofactor.

It localises to the cytoplasm. The enzyme catalyses RNA(n+1) + phosphate = RNA(n) + a ribonucleoside 5'-diphosphate. Its function is as follows. Involved in mRNA degradation. Catalyzes the phosphorolysis of single-stranded polyribonucleotides processively in the 3'- to 5'-direction. The protein is Polyribonucleotide nucleotidyltransferase of Pseudarthrobacter chlorophenolicus (strain ATCC 700700 / DSM 12829 / CIP 107037 / JCM 12360 / KCTC 9906 / NCIMB 13794 / A6) (Arthrobacter chlorophenolicus).